Here is a 449-residue protein sequence, read N- to C-terminus: Packaging protein 1 (449 aa).

Residues Met1 to Arg78 form a disordered region. Gly171–Ser178 lines the ATP pocket. Residues Arg440 to Lys449 are DNA-binding.

The protein belongs to the adenoviridae packaging protein 1 family. As to quaternary structure, homodimer. Part of a genome packaging complex composed of packaging proteins 1, 2 and 3; this complex specifically binds to the packaging sequence on the left end of viral genomic DNA and performs packaging of the viral genome. Interacts with protein 33K.

It is found in the virion. It localises to the host nucleus. The protein localises to the host nucleoplasm. The protein resides in the host nucleolus. In terms of biological role, component of the packaging machinery which encapsidates the viral DNA into preformed capsids and transcriptional activator of the viral major late promoter (MLP). Binds, along with packaging proteins 2 and 3, to the specific packaging sequence on the left end of viral genomic DNA and displays ATPase activity thereby providing the power stroke of the packaging machinery. The activity of packaging protein IVa2 is stimulated by protein 33K which acts as a terminase. May be the protein that pumps DNA into the capsid powered by ATP hydrolysis. Specifically binds to the 5'-CG-3' nucleotides of the repeats making up the packaging sequence. Component of the DEF-A and DEF-B transcription factors that bind downstream elements of the major late promoter (MLP), and stimulate transcription from the MLP after initiation of viral DNA replication. DEF-A is a heterodimer packaging proteins 1 and 2 and DEF-B is a homodimer of packaging protein 1. This chain is Packaging protein 1, found in Human adenovirus C serotype 5 (HAdV-5).